Here is a 752-residue protein sequence, read N- to C-terminus: Cytosolic phospholipase A2 (752 aa).

A phospholipid binding region spans residues 1-178 (MSFIDPYQHI…MKKLLGPKKS (178 aa)). Serine 2 carries the post-translational modification Phosphoserine. One can recognise a C2 domain in the interval 6–122 (PYQHIIVEHQ…KVGEKKEVPF (117 aa)). Ca(2+)-binding residues include aspartate 40, threonine 41, aspartate 43, asparagine 65, aspartate 93, alanine 94, and asparagine 95. In terms of domain architecture, PLA2c spans 140 to 740 (SCPDLRFSMA…SNVEARKFFN (601 aa)). The Nucleophile role is filled by serine 228. Threonine 268 is modified (phosphothreonine). A disordered region spans residues 427–457 (KHIVSNDSSDSDDEAQGPKGTENEDAEREYQ). Phosphoserine is present on residues serine 434, serine 435, and serine 437. At serine 505 the chain carries Phosphoserine; by MAPK. Residues serine 511 and serine 515 each carry the phosphoserine modification. Residue lysine 541 forms a Glycyl lysine isopeptide (Lys-Gly) (interchain with G-Cter in SUMO2) linkage. The active-site Proton acceptor is the aspartate 549. Residue lysine 606 forms a Glycyl lysine isopeptide (Lys-Gly) (interchain with G-Cter in SUMO2) linkage. Phosphoserine is present on residues serine 727 and serine 729.

In terms of assembly, interacts with KAT5. Post-translationally, phosphorylated at both Ser-505 and Ser-727 in response to mitogenic stimuli. In terms of tissue distribution, in brain tissue, expressed in low levels in olfactory mitral and granule cells, in hippocampal pyramidal cells and in dentate and cerebellar granule cells.

Its subcellular location is the cytoplasm. It localises to the golgi apparatus membrane. The protein resides in the nucleus envelope. It carries out the reaction a 1,2-diacyl-sn-glycero-3-phosphocholine + H2O = a 1-acyl-sn-glycero-3-phosphocholine + a fatty acid + H(+). The catalysed reaction is a 1-O-alkyl-2-acyl-sn-glycero-3-phosphocholine + H2O = a 1-O-alkyl-sn-glycero-3-phosphocholine + a fatty acid + H(+). It catalyses the reaction a 1-acyl-sn-glycero-3-phosphocholine + H2O = sn-glycerol 3-phosphocholine + a fatty acid + H(+). The enzyme catalyses 1-hexadecanoyl-2-(5Z,8Z,11Z,14Z-eicosatetraenoyl)-sn-glycero-3-phosphocholine + H2O = 1-hexadecanoyl-sn-glycero-3-phosphocholine + (5Z,8Z,11Z,14Z)-eicosatetraenoate + H(+). It carries out the reaction 1,2-di-(5Z,8Z,11Z,14Z-eicosatetraenoyl)-sn-glycero-3-phosphocholine + H2O = 1-(5Z,8Z,11Z,14Z-eicosatetraenoyl)-sn-glycero-3-phosphocholine + (5Z,8Z,11Z,14Z)-eicosatetraenoate + H(+). The catalysed reaction is 1-octadecanoyl-2-(5Z,8Z,11Z,14Z-eicosatetraenoyl)-sn-glycero-3-phosphocholine + H2O = 1-octadecanoyl-sn-glycero-3-phosphocholine + (5Z,8Z,11Z,14Z)-eicosatetraenoate + H(+). It catalyses the reaction 1-hexadecanoyl-2-(9Z,12Z-octadecadienoyl)-sn-glycero-3-phosphocholine + H2O = (9Z,12Z)-octadecadienoate + 1-hexadecanoyl-sn-glycero-3-phosphocholine + H(+). The enzyme catalyses 1-octadecanoyl-2-(9Z,12Z,15Z-octadecatrienoyl)-sn-glycero-3-phosphocholine + H2O = (9Z,12Z,15Z)-octadecatrienoate + 1-octadecanoyl-sn-glycero-3-phosphocholine + H(+). It carries out the reaction 1-(5Z,8Z,11Z,14Z-eicosatetraenoyl)-2-hexadecanoyl-sn-glycero-3-phosphocholine + H2O = 1-(5Z,8Z,11Z,14Z-eicosatetraenoyl)-sn-glycero-3-phosphocholine + hexadecanoate + H(+). The catalysed reaction is 1-O-hexadecyl-2-(5Z,8Z,11Z,14Z)-eicosatetraenoyl-sn-glycero-3-phosphocholine + H2O = 1-O-hexadecyl-sn-glycero-3-phosphocholine + (5Z,8Z,11Z,14Z)-eicosatetraenoate + H(+). It catalyses the reaction 1,2-di-(9Z-octadecenoyl)-sn-glycero-3-phospho-(1'-sn-glycerol) + H2O = 1-(9Z-octadecenoyl)-sn-glycero-3-phospho-(1'-sn-glycerol) + (9Z)-octadecenoate + H(+). The enzyme catalyses 1-octadecanoyl-2-(5Z,8Z,11Z,14Z-eicosatetraenoyl)-sn-glycero-3-phosphate + H2O = 1-octadecanoyl-sn-glycero-3-phosphate + (5Z,8Z,11Z,14Z)-eicosatetraenoate + H(+). It carries out the reaction 1-hexadecanoyl-sn-glycero-3-phosphocholine + H2O = sn-glycerol 3-phosphocholine + hexadecanoate + H(+). The catalysed reaction is 2-(prostaglandin E2)-sn-glycero-3-phosphoethanolamine + H2O = sn-glycero-3-phosphoethanolamine + prostaglandin E2 + H(+). It catalyses the reaction 2-[(15S)-hydroxy-(5Z,8Z,11Z,13E)-eicosatetraenoyl]-sn-glycero-3-phosphocholine + H2O = (15S)-hydroxy-(5Z,8Z,11Z,13E)-eicosatetraenoate + sn-glycerol 3-phosphocholine + H(+). The enzyme catalyses 2-[(15R)-hydroxy-(5Z,8Z,11Z,13E)-eicosatetraenoyl]-sn-glycero-3-phosphocholine + H2O = (15R)-hydroxy-(5Z,8Z,11Z,13E)-eicosatetraenoate + sn-glycerol 3-phosphocholine + H(+). It carries out the reaction 2-(prostaglandin E2)-sn-glycero-3-phosphocholine + H2O = prostaglandin E2 + sn-glycerol 3-phosphocholine + H(+). The catalysed reaction is 2-[(11R)-hydroxy-(5Z,8Z,12E,14Z)-eicosatetraenoyl]-sn-glycero-3-phosphocholine + H2O = (11R)-hydroxy-(5Z,8Z,12E,14Z)-eicosatetraenoate + sn-glycerol 3-phosphocholine + H(+). It catalyses the reaction 1-(5Z,8Z,11Z,14Z-eicosatetraenoyl)-2-O-hexadecyl-sn-glycero-3-phosphocholine + H2O = 2-O-hexadecyl-sn-glycero-3-phosphocholine + (5Z,8Z,11Z,14Z)-eicosatetraenoate + H(+). The enzyme catalyses 1-octadecanoyl-2-(5Z,8Z,11Z,14Z-eicosatetraenoyl)-sn-glycero-3-phosphocholine + glycerol = 1-(5Z,8Z,11Z,14Z-eicosatetraenoyl)-glycerol + 1-octadecanoyl-sn-glycero-3-phosphocholine. It carries out the reaction 1-octadecanoyl-2-(9Z,12Z,15Z-octadecatrienoyl)-sn-glycero-3-phosphocholine + glycerol = 1-(9Z,12Z,15Z-octadecatrienoyl)-glycerol + 1-octadecanoyl-sn-glycero-3-phosphocholine. The protein operates within lipid metabolism; arachidonate metabolism. Its pathway is membrane lipid metabolism; glycerophospholipid metabolism. It functions in the pathway lipid metabolism; prostaglandin biosynthesis. It participates in lipid metabolism; leukotriene B4 biosynthesis. Activated by cytosolic calcium, which is necessary for binding to membrane lipids. Activated by phosphorylation in response to mitogenic stimuli. Has primarily calcium-dependent phospholipase and lysophospholipase activities, with a major role in membrane lipid remodeling and biosynthesis of lipid mediators of the inflammatory response. Plays an important role in embryo implantation and parturition through its ability to trigger prostanoid production. Preferentially hydrolyzes the ester bond of the fatty acyl group attached at sn-2 position of phospholipids (phospholipase A2 activity). Selectively hydrolyzes sn-2 arachidonoyl group from membrane phospholipids, providing the precursor for eicosanoid biosynthesis via the cyclooxygenase pathway. In an alternative pathway of eicosanoid biosynthesis, hydrolyzes sn-2 fatty acyl chain of eicosanoid lysophopholipids to release free bioactive eicosanoids. Hydrolyzes the ester bond of the fatty acyl group attached at sn-1 position of phospholipids (phospholipase A1 activity) only if an ether linkage rather than an ester linkage is present at the sn-2 position. This hydrolysis is not stereospecific. Has calcium-independent phospholipase A2 and lysophospholipase activities in the presence of phosphoinositides. Has O-acyltransferase activity. Catalyzes the transfer of fatty acyl chains from phospholipids to a primary hydroxyl group of glycerol (sn-1 or sn-3), potentially contributing to monoacylglycerol synthesis. In Rattus norvegicus (Rat), this protein is Cytosolic phospholipase A2 (Pla2g4a).